We begin with the raw amino-acid sequence, 340 residues long: MAPANNPKGLGFQKWSAFWLWAIIGGYFAAFNIWNMRKLDFEGSFQVNSLPGEYAWMKRTAGFVSRASRMRFAWVPVQLLFMISTDFITSACSVIALLQFVPQLRKKYMSIHRMLGEAFFVMMGFGAPSGIMVAVHAFGAAENPSVRLSIMLTGVLTICFLATSFLCITTNGTLSRLRLKLHGASNPDAQDLQKYRAIDIRRHREFILRTLAVMSTGSFSSVYLIIPEVMNWTLGYVAFSCGTLVEDLGLGASYLRSAYPACMVENGGHAGTIVAVKADLSGSEEELTAWGRAGIGMAFWGALVLHMVLAEIYVSALTAVCLLLRYVGLILWLQIRVKSR.

Helical transmembrane passes span 15-35 (WSAF…NIWN), 81-101 (FMIS…LQFV), 118-138 (AFFV…VHAF), and 148-168 (LSIM…FLCI). N-linked (GlcNAc...) asparagine glycosylation is present at Asn171. 2 helical membrane passes run 219–239 (FSSV…YVAF) and 315–335 (SALT…WLQI).

The protein resides in the membrane. It functions in the pathway secondary metabolite biosynthesis. In terms of biological role, part of the cluster that mediates the biosynthesis of a highly modified cyclo-arginine-tryptophan dipeptide (cRW). The first step of the pathway is perfornmed by the arginine-containing cyclodipeptide synthase (RCPDS) avaA that acts as the scaffold-generating enzyme and is responsible for formation of the cyclo-Arg-Trp (cRW) diketopiperazine. AvaB then acts as a multifunctional flavoenzyme that is responsible for generating the cyclo-Arg-formylkynurenine DKP, which can be deformylated by avaC. AvaB then further catalyzes an additional N-oxidation followed by cyclization and dehydration. The next step is an N-acetylation of the guanidine group catalyzed by the arginine N-acetyltransferase avaD. The roles of the additional enzymes identified within the ava cluster still have to be determined. This is Ava biosynthesis cluster protein G from Aspergillus versicolor.